A 371-amino-acid polypeptide reads, in one-letter code: uncharacterized protein (371 aa).

H76 contacts Zn(2+). D78 is a catalytic residue. Zn(2+) is bound at residue D106. E139 acts as the Proton acceptor in catalysis. Zn(2+)-binding residues include E140, D163, and H344.

This sequence belongs to the peptidase M20A family. It depends on Zn(2+) as a cofactor.

In terms of biological role, could be a peptidase. This is an uncharacterized protein from Bacillus subtilis (strain 168).